A 438-amino-acid chain; its full sequence is UDP-N-acetyl-D-mannosamine dehydrogenase (438 aa).

Positions 21, 22, 41, 46, 93, and 131 each coordinate NAD(+). UDP-N-acetyl-alpha-D-mannosaminouronate contacts are provided by Arg160, Val161, Lys212, Asn216, Arg219, His250, Arg252, and Gly263. Lys212 functions as the Proton donor/acceptor in the catalytic mechanism. Cys266 functions as the Nucleophile in the catalytic mechanism. The UDP-N-acetyl-alpha-D-mannosaminouronate site is built by Tyr323 and Lys324. Residue Arg331 coordinates NAD(+). Position 409 (Lys409) interacts with UDP-N-acetyl-alpha-D-mannosaminouronate.

It belongs to the UDP-glucose/GDP-mannose dehydrogenase family. In terms of assembly, homotetramer; probably dimer of dimers.

The catalysed reaction is UDP-N-acetyl-alpha-D-mannosamine + 2 NAD(+) + H2O = UDP-N-acetyl-alpha-D-mannosaminouronate + 2 NADH + 3 H(+). Catalyzes the four-electron oxidation of UDP-N-acetyl-D-mannosamine (UDP-ManNAc), reducing NAD(+) and releasing UDP-N-acetylmannosaminuronic acid (UDP-ManNAcA). The chain is UDP-N-acetyl-D-mannosamine dehydrogenase (wecC) from Methanococcus aeolicus (strain ATCC BAA-1280 / DSM 17508 / OCM 812 / Nankai-3).